The primary structure comprises 106 residues: HIG1 domain family member 2A, mitochondrial (106 aa).

An N-acetylalanine modification is found at A2. In terms of domain architecture, HIG1 spans 20 to 106 (VIEGLSPTVY…LAVTAMKSRP (87 aa)). 2 helical membrane-spanning segments follow: residues 47-67 (PVVP…LYSF) and 83-103 (IAAQ…TAMK). Over 104–106 (SRP) the chain is Mitochondrial matrix.

In terms of assembly, associates with cytochrome c oxidase (COX, complex IV); proposed complex component.

The protein localises to the mitochondrion membrane. It is found in the mitochondrion inner membrane. Its function is as follows. Proposed subunit of cytochrome c oxidase (COX, complex IV), which is the terminal component of the mitochondrial respiratory chain that catalyzes the reduction of oxygen to water. May be involved in cytochrome c oxidase activity. May play a role in the assembly of respiratory supercomplexes. The chain is HIG1 domain family member 2A, mitochondrial (HIGD2A) from Homo sapiens (Human).